The primary structure comprises 579 residues: Threonylcarbamoyladenosine tRNA methylthiotransferase (579 aa).

Phosphoserine is present on Ser53. The MTTase N-terminal domain occupies 64–172; it reads QKIWIRTWGC…VVEVVEETIK (109 aa). The [4Fe-4S] cluster site is built by Cys73 and Cys109. Phosphoserine is present on Ser122. [4Fe-4S] cluster contacts are provided by Cys138, Cys214, Cys218, and Cys221. In terms of domain architecture, Radical SAM core spans 200-431; the sequence is RKNPLIEIIS…RVFHSYSPYD (232 aa). The region spanning 431-493 is the TRAM domain; that stretch reads DHKIGERQQV…KHFMKGQPVS (63 aa). Thr499 is subject to Phosphothreonine. A helical transmembrane segment spans residues 556 to 578; it reads CALRMSVGLALLGLLFAFFVKVY.

This sequence belongs to the methylthiotransferase family. CDKAL1 subfamily. Requires [4Fe-4S] cluster as cofactor. As to expression, expressed in pancreatic islets.

It localises to the endoplasmic reticulum membrane. The catalysed reaction is N(6)-L-threonylcarbamoyladenosine(37) in tRNA + (sulfur carrier)-SH + AH2 + 2 S-adenosyl-L-methionine = 2-methylsulfanyl-N(6)-L-threonylcarbamoyladenosine(37) in tRNA + (sulfur carrier)-H + 5'-deoxyadenosine + L-methionine + A + S-adenosyl-L-homocysteine + 2 H(+). Its function is as follows. Catalyzes the methylthiolation of N6-threonylcarbamoyladenosine (t(6)A), leading to the formation of 2-methylthio-N6-threonylcarbamoyladenosine (ms(2)t(6)A) at position 37 in tRNAs that read codons beginning with adenine. The protein is Threonylcarbamoyladenosine tRNA methylthiotransferase (CDKAL1) of Homo sapiens (Human).